Reading from the N-terminus, the 142-residue chain is Large ribosomal subunit protein uL13 (142 aa).

Belongs to the universal ribosomal protein uL13 family. As to quaternary structure, part of the 50S ribosomal subunit.

This protein is one of the early assembly proteins of the 50S ribosomal subunit, although it is not seen to bind rRNA by itself. It is important during the early stages of 50S assembly. The chain is Large ribosomal subunit protein uL13 from Francisella tularensis subsp. holarctica (strain FTNF002-00 / FTA).